Here is a 588-residue protein sequence, read N- to C-terminus: 3-methylmercaptopropionyl-CoA dehydrogenase (588 aa).

The active-site Proton acceptor is Glu435.

The protein belongs to the acyl-CoA dehydrogenase family. FAD serves as cofactor.

The catalysed reaction is 3-(methylsulfanyl)propanoyl-CoA + oxidized [electron-transfer flavoprotein] + H(+) = 3-(methylsulfanyl)acryloyl-CoA + reduced [electron-transfer flavoprotein]. Involved in the assimilation of dimethylsulphoniopropionate (DMSP), an important compound in the fixation of carbon in marine phytoplankton, by mediating the conversion of 3-(methylthio)propanoyl-CoA (MMPA-CoA) to 3-(methylthio)acryloyl-CoA (MTA-CoA). This is 3-methylmercaptopropionyl-CoA dehydrogenase from Ruegeria pomeroyi (strain ATCC 700808 / DSM 15171 / DSS-3) (Silicibacter pomeroyi).